The primary structure comprises 151 residues: Globin CTT-VIII (151 aa).

A Globin domain is found at 4–148 (PMSADQLALF…MFFYILHALE (145 aa)). H62 and H97 together coordinate heme b.

The protein belongs to the globin family. In terms of assembly, homodimer.

This Chironomus thummi thummi (Midge) protein is Globin CTT-VIII (CTT-8).